Here is a 139-residue protein sequence, read N- to C-terminus: Putative nickel-responsive regulator (139 aa).

Ni(2+) is bound by residues His77, His88, His90, and Cys96.

The protein belongs to the transcriptional regulatory CopG/NikR family. The cofactor is Ni(2+).

Transcriptional regulator. The sequence is that of Putative nickel-responsive regulator from Haloarcula marismortui (strain ATCC 43049 / DSM 3752 / JCM 8966 / VKM B-1809) (Halobacterium marismortui).